We begin with the raw amino-acid sequence, 529 residues long: Beta-galactoside alpha-2,6-sialyltransferase 2 (529 aa).

Residues 1 to 11 (MKPHLKQWRQR) lie on the Cytoplasmic side of the membrane. Residues 12 to 32 (MLFGLFAGGLLFLLIFIYFTD) traverse the membrane as a helical; Signal-anchor for type II membrane protein segment. The Lumenal segment spans residues 33–529 (SNPAEPVPSS…PAPSPVIPHS (497 aa)). Residues 142–186 (SHSQGTLGFPSPGEPGPREGAFPAAQVQRRRVKKRHRRQRRSHVL) form a disordered region. Basic residues predominate over residues 169 to 183 (QRRRVKKRHRRQRRS). Asparagine 211 carries an N-linked (GlcNAc...) asparagine glycan. Cystine bridges form between cysteine 253–cysteine 519, cysteine 296–cysteine 448, and cysteine 466–cysteine 477.

This sequence belongs to the glycosyltransferase 29 family.

The protein localises to the golgi apparatus. It localises to the golgi stack membrane. It catalyses the reaction a beta-D-galactoside + CMP-N-acetyl-beta-neuraminate = an N-acetyl-alpha-neuraminyl-(2-&gt;6)-beta-D-galactosyl derivative + CMP + H(+). In terms of biological role, transfers sialic acid from the donor of substrate CMP-sialic acid to galactose containing acceptor substrates. Has alpha-2,6-sialyltransferase activity toward oligosaccharides that have the Gal-beta-1,4-GlcNAc sequence at the non-reducing end of their carbohydrate groups, but it has weak or no activities toward glycoproteins and glycolipids. The chain is Beta-galactoside alpha-2,6-sialyltransferase 2 (ST6GAL2) from Pan troglodytes (Chimpanzee).